The sequence spans 536 residues: ATP synthase subunit alpha, mitochondrial (536 aa).

The transit peptide at 1–24 (MFKNALRRAGVAAPRISRVAQRGY) directs the protein to the mitochondrion. 195–202 (GDRQTGKT) is an ATP binding site.

As to quaternary structure, F-type ATP synthases have 2 components, the catalytic core F(1) and the membrane-embedded component F(0), linked together by a central stalk and a peripheral stalk. The central stalk, also called rotor shaft, is often seen as part of F(1). The peripheral stalk is seen as part of F(0). F(0) contains the membrane channel next to the rotor. F-type ATP synthases form dimers but each monomer functions independently in ATP generation. The dimer consists of 17 different polypeptides: ATP1 (subunit alpha, 3 molecules per monomer, part of F(1)), ATP2 (subunit beta, 3 copies per monomer, part of F(1)), ATP3 (subunit gamma, part of the central stalk), ATP4 (subunit b, part of the peripheral stalk), ATP5/OSCP (subunit 5/OSCP, part of the peripheral stalk), ATP6 (subunit a, part of the peripheral stalk), ATP7 (subunit d, part of the peripheral stalk), ATP8 (subunit 8, part of the peripheral stalk), OLI1 (subunit c, part of the rotor, 10 molecules per monomer), ATP14 (subunit h, part of the peripheral stalk), ATP15 (subunit epsilon, part of the central stalk), ATP16 (subunit delta, part of the central stalk), ATP17 (subunit f, part of the peripheral stalk), ATP18 (subunit i/j, part of the peripheral stalk), ATP19 (subunit k, dimer-specific, at interface between monomers), ATP20 (subunit g, at interface between monomers), TIM11 (subunit e, at interface between monomers).

The protein resides in the mitochondrion inner membrane. Functionally, mitochondrial membrane ATP synthase (F(1)F(0) ATP synthase or Complex V) produces ATP from ADP in the presence of a proton gradient across the membrane which is generated by electron transport complexes of the respiratory chain. F-type ATP synthases consist of two structural domains, F(1) - containing the extramembraneous catalytic core, and F(0) - containing the membrane proton channel, linked together by a central stalk and a peripheral stalk. During catalysis, ATP synthesis in the catalytic domain of F(1) is coupled via a rotary mechanism of the central stalk subunits to proton translocation. Subunits alpha/ATP1 and beta/ATP2 form the catalytic core in F(1). Rotation of the central stalk against the surrounding alpha/ATP1(3)beta/ATP2(3) subunits leads to hydrolysis of ATP in three separate catalytic sites on the beta/ATP2 subunits. Subunit alpha/ATP1 does not bear the catalytic high-affinity ATP-binding sites. The protein is ATP synthase subunit alpha, mitochondrial of Yarrowia lipolytica (strain CLIB 122 / E 150) (Yeast).